A 230-amino-acid polypeptide reads, in one-letter code: Uracil-DNA glycosylase (230 aa).

Catalysis depends on Asp-65, which acts as the Proton acceptor.

This sequence belongs to the uracil-DNA glycosylase (UDG) superfamily. UNG family.

It localises to the cytoplasm. The enzyme catalyses Hydrolyzes single-stranded DNA or mismatched double-stranded DNA and polynucleotides, releasing free uracil.. Its function is as follows. Excises uracil residues from the DNA which can arise as a result of misincorporation of dUMP residues by DNA polymerase or due to deamination of cytosine. This chain is Uracil-DNA glycosylase, found in Lactiplantibacillus plantarum (strain ATCC BAA-793 / NCIMB 8826 / WCFS1) (Lactobacillus plantarum).